The primary structure comprises 99 residues: Large ribosomal subunit protein uL23 (99 aa).

This sequence belongs to the universal ribosomal protein uL23 family. Part of the 50S ribosomal subunit. Contacts protein L29, and trigger factor when it is bound to the ribosome.

Its function is as follows. One of the early assembly proteins it binds 23S rRNA. One of the proteins that surrounds the polypeptide exit tunnel on the outside of the ribosome. Forms the main docking site for trigger factor binding to the ribosome. This Lachnospira eligens (strain ATCC 27750 / DSM 3376 / VPI C15-48 / C15-B4) (Eubacterium eligens) protein is Large ribosomal subunit protein uL23.